A 210-amino-acid chain; its full sequence is Redox-sensing transcriptional repressor Rex (210 aa).

Residues 17–56 (KYHRYLYELLKNDVDRISSKELSEKIGFTASQIRQDLNCF) constitute a DNA-binding region (H-T-H motif). 91–96 (GAGNIG) provides a ligand contact to NAD(+).

It belongs to the transcriptional regulatory Rex family. Homodimer.

The protein resides in the cytoplasm. In terms of biological role, modulates transcription in response to changes in cellular NADH/NAD(+) redox state. In Clostridium botulinum (strain ATCC 19397 / Type A), this protein is Redox-sensing transcriptional repressor Rex.